The sequence spans 461 residues: Probable protein phosphatase 2C 40 (461 aa).

Residues 34–63 (REASAERASASASAGAGGRERERRPSVAAG) form a disordered region. In terms of domain architecture, PPM-type phosphatase spans 57-321 (RPSVAAGQAC…DDTTCIVIDI (265 aa)). The Mn(2+) site is built by D98, G99, D273, and D312. Basic and acidic residues predominate over residues 439 to 453 (KKEAMEGKRHSRDSS). Residues 439–461 (KKEAMEGKRHSRDSSSRNSGSSE) form a disordered region.

It belongs to the PP2C family. Requires Mg(2+) as cofactor. Mn(2+) is required as a cofactor. In terms of tissue distribution, expressed in leaves, leaf sheaths, panicles, nodes and internodes. Expressed at low levels in roots and stems.

The protein resides in the nucleus. The protein localises to the cytoplasm. It catalyses the reaction O-phospho-L-seryl-[protein] + H2O = L-seryl-[protein] + phosphate. The catalysed reaction is O-phospho-L-threonyl-[protein] + H2O = L-threonyl-[protein] + phosphate. Its function is as follows. Mediates the negative regulation of osmotic and salt stress tolerance through regulation of the jasmonate and abscisic acid signaling pathways and modulation of the raffinose family oligosaccharide metabolism pathway. This is Probable protein phosphatase 2C 40 from Oryza sativa subsp. japonica (Rice).